We begin with the raw amino-acid sequence, 156 residues long: UPF0225 protein PFLU_1319 (156 aa).

It belongs to the UPF0225 family.

In Pseudomonas fluorescens (strain SBW25), this protein is UPF0225 protein PFLU_1319.